A 399-amino-acid chain; its full sequence is 1-deoxy-D-xylulose 5-phosphate reductoisomerase (399 aa).

Residues threonine 13, glycine 14, serine 15, isoleucine 16, and asparagine 127 each contribute to the NADPH site. Lysine 128 lines the 1-deoxy-D-xylulose 5-phosphate pocket. Glutamate 129 contributes to the NADPH binding site. Aspartate 153 serves as a coordination point for Mn(2+). 1-deoxy-D-xylulose 5-phosphate is bound by residues serine 154, glutamate 155, serine 187, and histidine 210. Glutamate 155 is a Mn(2+) binding site. Residue glycine 216 participates in NADPH binding. Serine 223, asparagine 228, lysine 229, and glutamate 232 together coordinate 1-deoxy-D-xylulose 5-phosphate. Glutamate 232 contributes to the Mn(2+) binding site.

This sequence belongs to the DXR family. Requires Mg(2+) as cofactor. Mn(2+) serves as cofactor.

It catalyses the reaction 2-C-methyl-D-erythritol 4-phosphate + NADP(+) = 1-deoxy-D-xylulose 5-phosphate + NADPH + H(+). The protein operates within isoprenoid biosynthesis; isopentenyl diphosphate biosynthesis via DXP pathway; isopentenyl diphosphate from 1-deoxy-D-xylulose 5-phosphate: step 1/6. In terms of biological role, catalyzes the NADPH-dependent rearrangement and reduction of 1-deoxy-D-xylulose-5-phosphate (DXP) to 2-C-methyl-D-erythritol 4-phosphate (MEP). The sequence is that of 1-deoxy-D-xylulose 5-phosphate reductoisomerase from Bordetella pertussis (strain Tohama I / ATCC BAA-589 / NCTC 13251).